The primary structure comprises 1331 residues: DNA-directed RNA polymerase subunit beta' (1331 aa).

Zn(2+) contacts are provided by C220, C293, C300, and C303. 2 disordered regions span residues 1236–1257 and 1294–1331; these read DFVDEGTSRSPNGYSNVVTNDN and ISGDELISDDTPIPSDVQGKAPVIDDDAMIDDNWMKDQ. A compositionally biased stretch (polar residues) spans 1243–1257; that stretch reads SRSPNGYSNVVTNDN.

This sequence belongs to the RNA polymerase beta' chain family. RpoC2 subfamily. In cyanobacteria the RNAP catalytic core is composed of 2 alpha, 1 beta, 1 beta', 1 gamma and 1 omega subunit. When a sigma factor is associated with the core the holoenzyme is formed, which can initiate transcription. The cofactor is Zn(2+).

It carries out the reaction RNA(n) + a ribonucleoside 5'-triphosphate = RNA(n+1) + diphosphate. In terms of biological role, DNA-dependent RNA polymerase catalyzes the transcription of DNA into RNA using the four ribonucleoside triphosphates as substrates. The protein is DNA-directed RNA polymerase subunit beta' of Picosynechococcus sp. (strain ATCC 27264 / PCC 7002 / PR-6) (Agmenellum quadruplicatum).